A 187-amino-acid polypeptide reads, in one-letter code: Adenine phosphoribosyltransferase (187 aa).

This sequence belongs to the purine/pyrimidine phosphoribosyltransferase family. In terms of assembly, homodimer.

It is found in the cytoplasm. It catalyses the reaction AMP + diphosphate = 5-phospho-alpha-D-ribose 1-diphosphate + adenine. The protein operates within purine metabolism; AMP biosynthesis via salvage pathway; AMP from adenine: step 1/1. Catalyzes a salvage reaction resulting in the formation of AMP, that is energically less costly than de novo synthesis. The polypeptide is Adenine phosphoribosyltransferase (Yersinia enterocolitica serotype O:8 / biotype 1B (strain NCTC 13174 / 8081)).